A 175-amino-acid polypeptide reads, in one-letter code: Ribosome maturation factor RimM (175 aa).

The 80-residue stretch at 96-175 (EDEFYWRELF…RIEVDWDPGF (80 aa)) folds into the PRC barrel domain.

The protein belongs to the RimM family. In terms of assembly, binds ribosomal protein uS19.

Its subcellular location is the cytoplasm. Functionally, an accessory protein needed during the final step in the assembly of 30S ribosomal subunit, possibly for assembly of the head region. Essential for efficient processing of 16S rRNA. May be needed both before and after RbfA during the maturation of 16S rRNA. It has affinity for free ribosomal 30S subunits but not for 70S ribosomes. This Aliivibrio fischeri (strain ATCC 700601 / ES114) (Vibrio fischeri) protein is Ribosome maturation factor RimM.